Consider the following 845-residue polypeptide: ATP-binding cassette sub-family F member 1 (845 aa).

The segment at 1-261 (MPKAPKQQPP…HLSKKEKKKL (261 aa)) is disordered. Ser22 and Ser24 each carry phosphoserine. Basic residues predominate over residues 29–39 (KKGKKDKKIKK). Over residues 47–64 (VEDKQAGEEEKVLKEKEQ) the composition is skewed to basic and acidic residues. Basic residues predominate over residues 73 to 85 (QKKKRDTRKGRRK). The residue at position 105 (Ser105) is a Phosphoserine. Thr108 is modified (phosphothreonine). Residues Ser109 and Ser140 each carry the phosphoserine; by CK2 modification. Residues 147-160 (EKHPPKPAKPEKNR) show a composition bias toward basic and acidic residues. Ser166 is modified (phosphoserine). Over residues 206–226 (EIIKEKEPPKQGKEKAKKAEQ) the composition is skewed to basic and acidic residues. Acidic residues predominate over residues 227–241 (GSEEEGEGEEEEEEG). Position 228 is a phosphoserine (Ser228). Residues 304 to 548 (IKLEKFSISA…MYQQKQKELL (245 aa)) enclose the ABC transporter 1 domain. 336-343 (GPNGKGKT) contributes to the ATP binding site. Basic and acidic residues predominate over residues 559 to 580 (KELKAGGKSTKQAEKQTKEALT). The tract at residues 559–602 (KELKAGGKSTKQAEKQTKEALTRKQQKCRRKNQDEESQEAPELL) is disordered. Ser595 carries the post-translational modification Phosphoserine. Positions 625-840 (LGLHGVTFGY…VLEALGEVMV (216 aa)) constitute an ABC transporter 2 domain. 658–665 (GPNGVGKS) is an ATP binding site.

It belongs to the ABC transporter superfamily. ABCF family. EF3 subfamily. In terms of assembly, isoform 2 interacts (via N-terminus) with EIF2S1; the interaction is independent of its phosphorylated status. Isoform 2 associates (via both ABC transporter domains) with the ribosomes. Post-translationally, isoform 2 is phosphorylated at phosphoserine and phosphothreonine. Isoform 2 phosphorylation on Ser-109 and Ser-140 by CK2 inhibits association of EIF2 with ribosomes. In terms of tissue distribution, ubiquitous.

Its subcellular location is the cytoplasm. The protein resides in the nucleus. The protein localises to the nucleoplasm. It localises to the nucleus envelope. Functionally, isoform 2 is required for efficient Cap- and IRES-mediated mRNA translation initiation. Isoform 2 is not involved in the ribosome biogenesis. The polypeptide is ATP-binding cassette sub-family F member 1 (ABCF1) (Homo sapiens (Human)).